We begin with the raw amino-acid sequence, 483 residues long: Cobyric acid synthase (483 aa).

Positions 251 to 438 (SLVVAVPMLP…LHGVFNADEF (188 aa)) constitute a GATase cobBQ-type domain. The Nucleophile role is filled by C333. Residue H430 is part of the active site.

It belongs to the CobB/CobQ family. CobQ subfamily.

It participates in cofactor biosynthesis; adenosylcobalamin biosynthesis. In terms of biological role, catalyzes amidations at positions B, D, E, and G on adenosylcobyrinic A,C-diamide. NH(2) groups are provided by glutamine, and one molecule of ATP is hydrogenolyzed for each amidation. The polypeptide is Cobyric acid synthase (Brucella anthropi (strain ATCC 49188 / DSM 6882 / CCUG 24695 / JCM 21032 / LMG 3331 / NBRC 15819 / NCTC 12168 / Alc 37) (Ochrobactrum anthropi)).